The sequence spans 774 residues: Effector protein hopW1-1 (774 aa).

2 disordered regions span residues 1–33 and 301–340; these read MSPA…QSPQ and CQAG…VPGQ. The span at 9–23 shows a compositional bias: low complexity; it reads TPHSFPPSFTGTSSS. The segment covering 24-33 has biased composition (polar residues); the sequence is AENSHAQSPQ.

The protein belongs to the HopW family. Interacts (via C-terminus) with Arabidopsis WIN1, WIN2 and WIN3.

Its subcellular location is the secreted. Its function is as follows. Induces hypersensitive response (HR). This Pseudomonas syringae pv. maculicola protein is Effector protein hopW1-1 (hopW1-1).